The chain runs to 185 residues: Endoribonuclease YbeY (185 aa).

Zn(2+) contacts are provided by H135, H139, and H145.

The protein belongs to the endoribonuclease YbeY family. It depends on Zn(2+) as a cofactor.

The protein localises to the cytoplasm. Its function is as follows. Single strand-specific metallo-endoribonuclease involved in late-stage 70S ribosome quality control and in maturation of the 3' terminus of the 16S rRNA. This is Endoribonuclease YbeY from Parasynechococcus marenigrum (strain WH8102).